The primary structure comprises 132 residues: Small ribosomal subunit protein uS8 (132 aa).

It belongs to the universal ribosomal protein uS8 family. Part of the 30S ribosomal subunit. Contacts proteins S5 and S12.

One of the primary rRNA binding proteins, it binds directly to 16S rRNA central domain where it helps coordinate assembly of the platform of the 30S subunit. This chain is Small ribosomal subunit protein uS8, found in Clostridioides difficile (strain 630) (Peptoclostridium difficile).